A 481-amino-acid polypeptide reads, in one-letter code: Cobyric acid synthase (481 aa).

The 187-residue stretch at 247–433 folds into the GATase cobBQ-type domain; it reads AFNVVVPLLP…LHGLFDVPDS (187 aa). Cysteine 328 functions as the Nucleophile in the catalytic mechanism. Histidine 425 is a catalytic residue.

It belongs to the CobB/CobQ family. CobQ subfamily.

It participates in cofactor biosynthesis; adenosylcobalamin biosynthesis. Its function is as follows. Catalyzes amidations at positions B, D, E, and G on adenosylcobyrinic A,C-diamide. NH(2) groups are provided by glutamine, and one molecule of ATP is hydrogenolyzed for each amidation. The chain is Cobyric acid synthase from Alcanivorax borkumensis (strain ATCC 700651 / DSM 11573 / NCIMB 13689 / SK2).